The sequence spans 179 residues: Cell division protein ZapC (179 aa).

Belongs to the ZapC family. Interacts directly with FtsZ.

The protein localises to the cytoplasm. Functionally, contributes to the efficiency of the cell division process by stabilizing the polymeric form of the cell division protein FtsZ. Acts by promoting interactions between FtsZ protofilaments and suppressing the GTPase activity of FtsZ. This chain is Cell division protein ZapC, found in Photobacterium profundum (strain SS9).